We begin with the raw amino-acid sequence, 287 residues long: Protease HtpX (287 aa).

The next 2 membrane-spanning stretches (helical) occupy residues 4-24 (IFLLIATNLAVLLVASIVMSI) and 33-53 (GGLLVFAAIFGFGGAFISLAI). Histidine 139 contacts Zn(2+). Residue glutamate 140 is part of the active site. Histidine 143 provides a ligand contact to Zn(2+). 2 helical membrane-spanning segments follow: residues 154–174 (LIQGVVNTFVIFAARVVAGII) and 195–215 (AVVFVLDMLFGILASIIVAYF). Glutamate 220 is a binding site for Zn(2+).

It belongs to the peptidase M48B family. The cofactor is Zn(2+).

The protein localises to the cell inner membrane. This Shewanella sp. (strain MR-4) protein is Protease HtpX.